Reading from the N-terminus, the 185-residue chain is Meiotically up-regulated gene 5 protein (185 aa).

It is found in the cytoplasm. Functionally, required for correct meiotic chromosome segregation. This Schizosaccharomyces pombe (strain 972 / ATCC 24843) (Fission yeast) protein is Meiotically up-regulated gene 5 protein (mug5).